The sequence spans 329 residues: Ketol-acid reductoisomerase (NADP(+)) (329 aa).

The KARI N-terminal Rossmann domain occupies 2 to 182; it reads TQLFYDTDAD…GGTRAGILET (181 aa). Residues 25–28, Ser51, Ser53, and 83–86 contribute to the NADP(+) site; these read YGSQ and DEFQ. His108 is a catalytic residue. Residue Gly134 participates in NADP(+) binding. The KARI C-terminal knotted domain maps to 183-328; the sequence is NFKEETETDL…KGLRAMFSWL (146 aa). The Mg(2+) site is built by Asp191, Glu195, Glu227, and Glu231. Ser252 is a substrate binding site.

The protein belongs to the ketol-acid reductoisomerase family. The cofactor is Mg(2+).

It carries out the reaction (2R)-2,3-dihydroxy-3-methylbutanoate + NADP(+) = (2S)-2-acetolactate + NADPH + H(+). The enzyme catalyses (2R,3R)-2,3-dihydroxy-3-methylpentanoate + NADP(+) = (S)-2-ethyl-2-hydroxy-3-oxobutanoate + NADPH + H(+). The protein operates within amino-acid biosynthesis; L-isoleucine biosynthesis; L-isoleucine from 2-oxobutanoate: step 2/4. Its pathway is amino-acid biosynthesis; L-valine biosynthesis; L-valine from pyruvate: step 2/4. Involved in the biosynthesis of branched-chain amino acids (BCAA). Catalyzes an alkyl-migration followed by a ketol-acid reduction of (S)-2-acetolactate (S2AL) to yield (R)-2,3-dihydroxy-isovalerate. In the isomerase reaction, S2AL is rearranged via a Mg-dependent methyl migration to produce 3-hydroxy-3-methyl-2-ketobutyrate (HMKB). In the reductase reaction, this 2-ketoacid undergoes a metal-dependent reduction by NADPH to yield (R)-2,3-dihydroxy-isovalerate. This chain is Ketol-acid reductoisomerase (NADP(+)), found in Prochlorococcus marinus subsp. pastoris (strain CCMP1986 / NIES-2087 / MED4).